The primary structure comprises 693 residues: MTEITAEGNASTTTTVIDNKNGCIPKSPGKVLKRSVTEDIVTTFSSPAAWLLVIALIITWSAVAIVMFDLVDYKNFSASSIAKIGSDPLKLVNDAVEETTDWIYGFFSLLSDIISSEGDEDDEDADEDIDKGEIEEPPLKRKEIHQEKAEKEEKPEKKIQTKASHREREKGKEKLKGEKPEKTATHKEKLEKKERPETKMMAKEDKKIKTKEKTEEKAKKEMKVGKQEKVKPTAAKAKETPKTPPKARKKDDKEMPAVHEQKDQYAFCRYMIDMFVHGDLKPGQSPVMPPPSLTPSKPALSTTALEEKEKEEKKKMEKKDTSDTKKKEKEVKKKSEETTIDGKGKEPGKPPETKQMTAKLTTQAAARKDEKKEESKKMRKPTEEQPKGKKQEKKEKHIEPAKTPKKEHPGPSEKLKKAKAEQAKEEIAAASTKKALHGKKEEKAKTVEQEVKKEKSGKSSSDLKDKEVKKEKSGKSSSDLKDKEPQLKNEEKSKPQVKKEAKLASSDKGQTRKQNITRPEQVIPHVKPEKAEHQEKGHPSIKKDKPKPSSKGAPEVPDSGKKKIEKSEKESKVPTREENLQVYNVTKAEKPGKIPKDSKEAPASKKDKEDSKEAPTSKKDKEDSKDVPHSKKDKEVTDDVSSPKKQTRPISFFQCVYLNGYNGYGFQFPVTPVQQPGENPGKTNSPGQKQQEQ.

Residues Met-1–Pro-47 lie on the Cytoplasmic side of the membrane. Residues Ala-48–Phe-68 traverse the membrane as a helical segment. The Lumenal segment spans residues Asp-69–Gln-693. Residues Glu-117–Asp-130 show a composition bias toward acidic residues. Disordered stretches follow at residues Glu-117–Glu-260, Gly-278–Pro-649, and Phe-666–Gln-693. Basic and acidic residues-rich tracts occupy residues Lys-131 to Pro-241 and Lys-249 to Glu-260. Position 301 is a phosphoserine (Ser-301). Residues Leu-305–Glu-352 show a composition bias toward basic and acidic residues. Over residues Lys-354–Ala-364 the composition is skewed to polar residues. Composition is skewed to basic and acidic residues over residues Ala-366–Ile-427 and Gly-438–Lys-502. A glycan (N-linked (GlcNAc...) asparagine) is linked at Asn-515. 2 stretches are compositionally biased toward basic and acidic residues: residues Val-526–Lys-547 and Asp-558–Asn-579. An N-linked (GlcNAc...) asparagine glycan is attached at Asn-584. The span at Lys-587–Thr-637 shows a compositional bias: basic and acidic residues. Residues Pro-672–Gln-693 show a composition bias toward polar residues.

In terms of assembly, homooligomer of variable subunit number; disulfide-linked. Interacts with CASQ1 and RYR1 in skeletal muscle. Interacts with CASQ2. In terms of processing, phosphorylated by CaMK2. N-glycosylated. As to expression, detected in heart (at protein level). Detected in heart.

It is found in the sarcoplasmic reticulum membrane. Contributes to the regulation of lumenal Ca2+ release via the sarcoplasmic reticulum calcium release channels RYR1 and RYR2, a key step in triggering skeletal and heart muscle contraction. Required for normal organization of the triad junction, where T-tubules and the sarcoplasmic reticulum terminal cisternae are in close contact. Required for normal skeletal muscle strength. Plays a role in excitation-contraction coupling in the heart and in regulating the rate of heart beats. The protein is Triadin of Mus musculus (Mouse).